Reading from the N-terminus, the 349-residue chain is Rhodopsin (349 aa).

Residues threonine 1–alanine 33 are Extracellular-facing. N-linked (GlcNAc...) asparagine glycosylation occurs at asparagine 12. Residues phenylalanine 34 to valine 58 traverse the membrane as a helical segment. Over threonine 59–asparagine 70 the chain is Cytoplasmic. A helical membrane pass occupies residues tyrosine 71–tyrosine 93. Topologically, residues threonine 94 to cysteine 107 are extracellular. A disulfide bridge links cysteine 107 with cysteine 184. Residues asparagine 108–valine 130 form a helical membrane-spanning segment. The 'Ionic lock' involved in activated form stabilization signature appears at glutamate 131 to tryptophan 133. Residues glutamate 131–histidine 149 are Cytoplasmic-facing. A helical membrane pass occupies residues alanine 150–valine 170. Residues glycine 171–serine 199 lie on the Extracellular side of the membrane. An N-linked (GlcNAc...) asparagine glycan is attached at asparagine 197. The chain crosses the membrane as a helical span at residues phenylalanine 200–glycine 221. The Cytoplasmic segment spans residues arginine 222–arginine 249. The chain crosses the membrane as a helical span at residues methionine 250–tyrosine 271. Topologically, residues isoleucine 272 to leucine 283 are extracellular. A helical transmembrane segment spans residues phenylalanine 284 to cysteine 305. Lysine 293 is modified (N6-(retinylidene)lysine). Residues leucine 306 to alanine 349 lie on the Cytoplasmic side of the membrane. The S-palmitoyl cysteine moiety is linked to residue cysteine 320. Residues glutamate 326 to alanine 349 are disordered. The segment covering alanine 331–alanine 349 has biased composition (low complexity).

The protein belongs to the G-protein coupled receptor 1 family. Opsin subfamily. Post-translationally, phosphorylated on some or all of the serine and threonine residues present in the C-terminal region. Contains one covalently linked retinal chromophore.

The protein localises to the membrane. Its subcellular location is the cell projection. The protein resides in the cilium. It is found in the photoreceptor outer segment. Its function is as follows. Photoreceptor required for image-forming vision at low light intensity. While most salt water fish species use retinal as chromophore, most freshwater fish use 3-dehydroretinal, or a mixture of retinal and 3-dehydroretinal. Light-induced isomerization of 11-cis to all-trans retinal triggers a conformational change that activates signaling via G-proteins. Subsequent receptor phosphorylation mediates displacement of the bound G-protein alpha subunit by arrestin and terminates signaling. The protein is Rhodopsin (rho) of Myripristis berndti (Bigscale soldierfish).